Here is a 512-residue protein sequence, read N- to C-terminus: ADP,ATP carrier protein 4 (512 aa).

A run of 11 helical transmembrane segments spans residues 34 to 54, 71 to 91, 102 to 122, 157 to 177, 192 to 212, 231 to 251, 296 to 316, 330 to 350, 361 to 381, 390 to 410, and 476 to 496; these read ISKF…QNLI, ISFL…VIYV, IFYL…YVIF, FSLF…LLFW, FYPL…HFLE, FHTL…IVSI, LIAT…GPWK, AAFI…FVLL, FTSA…FFAV, LIIA…IGAI, and SISI…IWAT.

It belongs to the ADP/ATP translocase tlc family.

It is found in the cell membrane. Functionally, provides the rickettsial cell with host ATP in exchange for rickettsial ADP. This is an obligate exchange system. This energy acquiring activity is an important component of rickettsial parasitism. This is ADP,ATP carrier protein 4 (tlcD) from Rickettsia prowazekii (strain Madrid E).